Here is a 279-residue protein sequence, read N- to C-terminus: GATA transcription factor 15 (279 aa).

Positions 52–94 (AYDDHSTVTTSPSSPSSSSTGSVDCTLSLGTPSSRRAEPVAAA) are disordered. Low complexity predominate over residues 58 to 74 (TVTTSPSSPSSSSTGSV). Residues 154 to 179 (CANCGTASTPLWRNGPRGPKSLCNAC) form a GATA-type zinc finger.

This sequence belongs to the type IV zinc-finger family. Class B subfamily. In terms of tissue distribution, highly expressed in inflorescences. Expressed in vascular bundles of root stele within the elongation zones, of elongating upper internodes and of the junctions of leaf blades and sheaths.

Functionally, probable transcription factor that regulates organogenesis during transition from the vegetative to the reproductive phase. Regulates the expression of CYP78A11/PLA1, HD3A and MADS1 during reproductive development in rice. May act upstream of CYP78A11/PLA1 during panicle development. Acts independently of the photoperiodic and gibberellin signaling pathways. The chain is GATA transcription factor 15 from Oryza sativa subsp. japonica (Rice).